The sequence spans 70 residues: Cold shock protein CspV (70 aa).

The CSD domain maps to 7-67 (GSVKWFNETK…GKKGPQASNV (61 aa)).

The protein resides in the cytoplasm. The polypeptide is Cold shock protein CspV (cspV) (Vibrio cholerae serotype O1 (strain ATCC 39315 / El Tor Inaba N16961)).